The primary structure comprises 361 residues: Free fatty acid receptor 4 (361 aa).

At 1 to 45 (MSPECARAAGDAPLRSLEQANRTRFSFFSDVKGDHRLLLAAVETT) the chain is on the extracellular side. Asn21 is a glycosylation site (N-linked (GlcNAc...) asparagine). Residues 46–66 (VLALIFAVSLLGNVCALVLVA) form a helical membrane-spanning segment. The Cytoplasmic segment spans residues 67 to 77 (RRRRRGTTACL). The chain crosses the membrane as a helical span at residues 78-98 (VLNLFCADLLFISAIPLVLAV). Over 99–112 (RWTEAWLLGPVACH) the chain is Extracellular. Cys111 and Cys194 are joined by a disulfide. A helical membrane pass occupies residues 113 to 133 (LLFYLMTLSGSVTILTLAAVS). The Cytoplasmic segment spans residues 134 to 156 (LERMVCIVHLQRGVRGPGRRARA). Residues 157–177 (VLLTLIWGYSAVAALPLCVFF) traverse the membrane as a helical segment. Residues 178–204 (RVVPQRLPGADQEISICTLIWPTIAGE) are Extracellular-facing. A helical membrane pass occupies residues 205–225 (ISWDVSFVTLNFLVPGLVIVI). Residues 226 to 268 (SYSKILQITKASRKRLTVSLAYSESHQIRVSQQDFRLFRTLFL) lie on the Cytoplasmic side of the membrane. The chain crosses the membrane as a helical span at residues 269 to 289 (LMVSFFIMWSPIIITILLILI). Topologically, residues 290–295 (QNFKQD) are extracellular. Residues 296 to 316 (LVIWPSLFFWVVAFTFANSAL) traverse the membrane as a helical segment. Topologically, residues 317–361 (NPILYNMTLCRNEWKKIFCCFWFPEKGAILTDTSVKRNDLSVISG) are cytoplasmic. 2 positions are modified to phosphothreonine: Thr347 and Thr349. Phosphoserine occurs at positions 350, 357, and 360.

This sequence belongs to the G-protein coupled receptor 1 family. Interacts (via C-terminus) with ARRB2 following LCFAs stimulation. Post-translationally, phosphorylated at two clusters of Ser and Thr residues located in the intracellular C-terminus. Prerequisite for FFAR4 internalization via an ARRB2-dependent pathway. In terms of tissue distribution, highly expressed in lung and colon.

Its subcellular location is the cell membrane. It localises to the endosome membrane. The protein resides in the lysosome membrane. It is found in the cell projection. The protein localises to the cilium membrane. G-protein-coupled receptor for long-chain fatty acids (LCFAs) with a major role in adipogenesis, energy metabolism and inflammation. Signals via G-protein and beta-arrestin pathways. LCFAs sensing initiates activation of phosphoinositidase C-linked G proteins GNAQ and GNA11 (G(q)/G(11)), inducing a variety of cellular responses via second messenger pathways such as intracellular calcium mobilization, modulation of cyclic adenosine monophosphate (cAMP) production, and mitogen-activated protein kinases (MAPKs). After LCFAs binding, associates with beta-arrestin ARRB2 that acts as an adapter protein coupling the receptor to specific downstream signaling pathways, as well as mediating receptor endocytosis. In response to dietary fats, plays an important role in the regulation of adipocyte proliferation and differentiation. Acts as a receptor for omega-3 polyunsaturated fatty acids (PUFAs) at primary cilium of perivascular preadipocytes, initiating an adipogenic program via cAMP and CTCF-dependent chromatin remodeling that ultimately results in transcriptional activation of adipogenic genes and cell cycle entry. Induces differentiation of brown and beige adipocytes probably via autocrine and endocrine functions of FGF21 hormone. Contributes to the thermogenic activation of brown adipose tissue and the browning of white adipose tissue. Activates brown adipocytes by initiating intracellular calcium signaling leading to mitochondrial depolarization and fission, and overall increased mitochondrial respiration. Consequently stimulates fatty acid uptake and oxidation in mitochondria together with UCP1-mediated thermogenic respiration, eventually reducing fat mass. Regulates bi-potential differentiation of bone marrow mesenchymal stem cells toward osteoblasts or adipocytes likely by up-regulating distinct integrins. In response to dietary fats regulates hormone secretion and appetite. Stimulates GIP and GLP1 secretion from enteroendocrine cells as well as GCG secretion in pancreatic alpha cells, thereby playing a role in the regulation of blood glucose levels. Negatively regulates glucose-induced SST secretion in pancreatic delta cells. Mediates LCFAs inhibition of GHRL secretion, an appetite-controlling hormone. In taste buds, contributes to sensing of dietary fatty acids by the gustatory system. During the inflammatory response, promotes anti-inflammatory M2 macrophage differentiation in adipose tissue. Mediates the anti-inflammatory effects of omega-3 PUFAs via inhibition of NLRP3 inflammasome activation. In this pathway, interacts with adapter protein ARRB2 and inhibits the priming step triggered by Toll-like receptors (TLRs) at the level of TAK1 and TAB1. Further inhibits the activation step when ARRB2 directly associates with NLRP3, leading to inhibition of pro-inflammatory cytokine release. Mediates LCFAs anti-apoptotic effects. The chain is Free fatty acid receptor 4 (FFAR4) from Macaca fascicularis (Crab-eating macaque).